The primary structure comprises 412 residues: Multifunctional CCA protein (412 aa).

ATP is bound by residues Gly-8 and Arg-11. CTP-binding residues include Gly-8 and Arg-11. 2 residues coordinate Mg(2+): Asp-21 and Asp-23. Positions 91, 137, and 140 each coordinate ATP. CTP-binding residues include Arg-91, Arg-137, and Arg-140. Positions 228-329 (TGIHTMMVLE…VKLFDKADFW (102 aa)) constitute an HD domain.

It belongs to the tRNA nucleotidyltransferase/poly(A) polymerase family. Bacterial CCA-adding enzyme type 1 subfamily. Monomer. Can also form homodimers and oligomers. The cofactor is Mg(2+). Requires Ni(2+) as cofactor.

It catalyses the reaction a tRNA precursor + 2 CTP + ATP = a tRNA with a 3' CCA end + 3 diphosphate. The enzyme catalyses a tRNA with a 3' CCA end + 2 CTP + ATP = a tRNA with a 3' CCACCA end + 3 diphosphate. Its function is as follows. Catalyzes the addition and repair of the essential 3'-terminal CCA sequence in tRNAs without using a nucleic acid template. Adds these three nucleotides in the order of C, C, and A to the tRNA nucleotide-73, using CTP and ATP as substrates and producing inorganic pyrophosphate. tRNA 3'-terminal CCA addition is required both for tRNA processing and repair. Also involved in tRNA surveillance by mediating tandem CCA addition to generate a CCACCA at the 3' terminus of unstable tRNAs. While stable tRNAs receive only 3'-terminal CCA, unstable tRNAs are marked with CCACCA and rapidly degraded. The polypeptide is Multifunctional CCA protein (Shewanella pealeana (strain ATCC 700345 / ANG-SQ1)).